A 471-amino-acid polypeptide reads, in one-letter code: uncharacterized protein (471 aa).

11 helical membrane-spanning segments follow: residues 15–35 (LWGPPLIILLTGTGLYFTILL), 66–86 (PLQALTSALSSTIGAANIVGV), 89–109 (AIMFGGPGAVFWMWLIALFAM), 147–167 (WLGVFFSVALIVELIPSIMVQ), 179–199 (FSFNKIYAGIGIAFLIGLVVI), 210–230 (EFVVPLMAGAYAGAGLLIVLM), 237–257 (AFFSLVFSNAFTSSSAVGGFA), 303–323 (VIGIVIDTLIICTTTAFIVLA), 353–373 (GYFVSVSLVFFVVSTIMVVIF), 386–406 (LAGHVIKFVYLAAIIIGAAGG), and 410–430 (IWGVLDLALVFIVVPNVIALL).

The protein belongs to the alanine or glycine:cation symporter (AGCS) (TC 2.A.25) family.

Its subcellular location is the cell membrane. This is an uncharacterized protein from Bacillus subtilis (strain 168).